Reading from the N-terminus, the 81-residue chain is Photosystem I iron-sulfur center (81 aa).

2 consecutive 4Fe-4S ferredoxin-type domains span residues 2 to 31 and 39 to 68; these read SHSVKIYDTCIGCTQCVRACPTDVLEMIPW and IASAPRTEDCVGCKRCESACPTDFLSVRVY. 8 residues coordinate [4Fe-4S] cluster: Cys-11, Cys-14, Cys-17, Cys-21, Cys-48, Cys-51, Cys-54, and Cys-58.

The eukaryotic PSI reaction center is composed of at least 11 subunits. The cofactor is [4Fe-4S] cluster.

Its subcellular location is the plastid. It is found in the chloroplast thylakoid membrane. The enzyme catalyses reduced [plastocyanin] + hnu + oxidized [2Fe-2S]-[ferredoxin] = oxidized [plastocyanin] + reduced [2Fe-2S]-[ferredoxin]. Its function is as follows. Apoprotein for the two 4Fe-4S centers FA and FB of photosystem I (PSI); essential for photochemical activity. FB is the terminal electron acceptor of PSI, donating electrons to ferredoxin. The C-terminus interacts with PsaA/B/D and helps assemble the protein into the PSI complex. Required for binding of PsaD and PsaE to PSI. PSI is a plastocyanin-ferredoxin oxidoreductase, converting photonic excitation into a charge separation, which transfers an electron from the donor P700 chlorophyll pair to the spectroscopically characterized acceptors A0, A1, FX, FA and FB in turn. The chain is Photosystem I iron-sulfur center from Phalaenopsis aphrodite subsp. formosana (Moth orchid).